The primary structure comprises 354 residues: MIPKKIIIMAGGSGGHVFPGLTIARYLIEKGWLVNWIGTKNSIESRIIPKYGIKIHYISIKGLRNTSLKNLIISPIYILRAYYAVKKIIKTWSPDIVLGMGGYVSGPGGVASWNCNIPLLLHEQNKIAGITNKWLSRISTKNMQASPGVLRNAEVVGNPVCQSIIKVPNPINRFKNRTGLLRVLVIGGSQGSSILNRILPEVSFLLKEKIIFWHQTGNYELEKTKKKYNKLRLNQNLITSFIKNIASAYEWADLIICRSGALTVSEISIVGLGAIFIPYPHKDKQQHRNAEDLELIGAAKIIDQSNLNTKLIVNILNSLDRDKLFIMAKKAHSLGVRDAIFNIFNVINKISKKT.

UDP-N-acetyl-alpha-D-glucosamine contacts are provided by residues 13-15 (SGG), N125, S189, I242, 261-266 (ALTVSE), and Q286.

It belongs to the glycosyltransferase 28 family. MurG subfamily.

It is found in the cell inner membrane. The catalysed reaction is di-trans,octa-cis-undecaprenyl diphospho-N-acetyl-alpha-D-muramoyl-L-alanyl-D-glutamyl-meso-2,6-diaminopimeloyl-D-alanyl-D-alanine + UDP-N-acetyl-alpha-D-glucosamine = di-trans,octa-cis-undecaprenyl diphospho-[N-acetyl-alpha-D-glucosaminyl-(1-&gt;4)]-N-acetyl-alpha-D-muramoyl-L-alanyl-D-glutamyl-meso-2,6-diaminopimeloyl-D-alanyl-D-alanine + UDP + H(+). The protein operates within cell wall biogenesis; peptidoglycan biosynthesis. In terms of biological role, cell wall formation. Catalyzes the transfer of a GlcNAc subunit on undecaprenyl-pyrophosphoryl-MurNAc-pentapeptide (lipid intermediate I) to form undecaprenyl-pyrophosphoryl-MurNAc-(pentapeptide)GlcNAc (lipid intermediate II). The sequence is that of UDP-N-acetylglucosamine--N-acetylmuramyl-(pentapeptide) pyrophosphoryl-undecaprenol N-acetylglucosamine transferase from Buchnera aphidicola subsp. Acyrthosiphon pisum (strain APS) (Acyrthosiphon pisum symbiotic bacterium).